The sequence spans 175 residues: MADPARARRLAKRITTIVASAIEYEIKDPGLVGVTITDAKVTADLHDATVYYTVMGPTLDGEPDYAAAAAALERAKGVLRTKVGAGTGVRFTPTLTFTRDVTSDTVHRMDELLARARAADADLARVRVGAKPAGEADPYRDRGSVDEPSDAGGLVIRTSDGLEAENTGDDYQAED.

The disordered stretch occupies residues 131 to 175 (KPAGEADPYRDRGSVDEPSDAGGLVIRTSDGLEAENTGDDYQAED). Residues 162 to 175 (LEAENTGDDYQAED) are compositionally biased toward acidic residues.

It belongs to the RbfA family. As to quaternary structure, monomer. Binds 30S ribosomal subunits, but not 50S ribosomal subunits or 70S ribosomes.

It localises to the cytoplasm. In terms of biological role, one of several proteins that assist in the late maturation steps of the functional core of the 30S ribosomal subunit. Associates with free 30S ribosomal subunits (but not with 30S subunits that are part of 70S ribosomes or polysomes). Required for efficient processing of 16S rRNA. May interact with the 5'-terminal helix region of 16S rRNA. In Mycobacterium ulcerans (strain Agy99), this protein is Ribosome-binding factor A.